Here is a 498-residue protein sequence, read N- to C-terminus: Histidine--tRNA ligase (498 aa).

The protein belongs to the class-II aminoacyl-tRNA synthetase family. Homodimer.

The protein resides in the cytoplasm. It carries out the reaction tRNA(His) + L-histidine + ATP = L-histidyl-tRNA(His) + AMP + diphosphate + H(+). The protein is Histidine--tRNA ligase of Mycoplasmopsis synoviae (strain 53) (Mycoplasma synoviae).